The primary structure comprises 255 residues: Taurine import ATP-binding protein TauB (255 aa).

Residues 2 to 229 (LQISHLYADY…RFVAGESSRS (228 aa)) form the ABC transporter domain. 34-41 (GPSGCGKT) serves as a coordination point for ATP.

Belongs to the ABC transporter superfamily. Taurine importer (TC 3.A.1.17.1) family. As to quaternary structure, the complex is composed of two ATP-binding proteins (TauB), two transmembrane proteins (TauC) and a solute-binding protein (TauA).

Its subcellular location is the cell inner membrane. It carries out the reaction taurine(out) + ATP + H2O = taurine(in) + ADP + phosphate + H(+). Part of the ABC transporter complex TauABC involved in taurine import. Responsible for energy coupling to the transport system. The polypeptide is Taurine import ATP-binding protein TauB (Escherichia coli O6:K15:H31 (strain 536 / UPEC)).